Here is a 338-residue protein sequence, read N- to C-terminus: MSLSAFTLFLALIGGTSGQYYDYDFPLSIYGQSSPNCAPECNCPESYPSAMYCDELKLKSVPMVPPGIKYLYLRNNQIDHIDEKAFENVTDLQWLILDHNLLENSKIKGRVFSKLKQLKKLHINHNNLTESVGPLPKSLEDLQLTHNKITKLGSFEGLVNLTFIHLQHNRLKEDAVSAAFKGLKSLEYLDLSFNQIARLPSGLPVSLLTLYLDNNKISNIPDEYFKRFNALQYLRLSHNELADSGIPGNSFNVSSLVELDLSYNKLKNIPTVNENLENYYLEVNQLEKFDIKSFCKILGPLSYSKIKHLRLDGNRISETSLPPDMYECLRVANEVTLN.

Positions 1 to 18 (MSLSAFTLFLALIGGTSG) are cleaved as a signal peptide. Gln19 carries the pyrrolidone carboxylic acid modification. Residues Tyr20, Tyr21, Tyr23, and Tyr30 each carry the sulfotyrosine modification. An LRRNT domain is found at 28–66 (SIYGQSSPNCAPECNCPESYPSAMYCDELKLKSVPMVPP). LRR repeat units lie at residues 67–88 (GIKY…AFEN), 91–114 (DLQW…VFSK), 117–137 (QLKK…PLPK), 138–159 (SLED…EGLV), 160–181 (NLTF…AAFK), 185–205 (SLEY…GLPV), 206–227 (SLLT…YFKR), 230–253 (ALQY…SFNV), 255–276 (SLVE…NENL), and 277–296 (ENYY…SFCK). An N-linked (GlcNAc...) (keratan sulfate) asparagine glycan is attached at Asn88. Asn127 carries N-linked (GlcNAc...) (keratan sulfate) asparagine glycosylation. An N-linked (GlcNAc...) (keratan sulfate) asparagine glycan is attached at Asn160. The N-linked (GlcNAc...) (keratan sulfate) asparagine glycan is linked to Asn252. Residues Cys295 and Cys328 are joined by a disulfide bond. Residue Ser304 is modified to Phosphoserine. Residues 305–326 (KIKHLRLDGNRISETSLPPDMY) form an LRR 11 repeat.

This sequence belongs to the small leucine-rich proteoglycan (SLRP) family. SLRP class II subfamily. Binds to laminin. In terms of processing, sulfated on tyrosine residue(s). Post-translationally, contains keratan sulfate. In terms of tissue distribution, cornea and other tissues.

It localises to the secreted. It is found in the extracellular space. The protein resides in the extracellular matrix. In Homo sapiens (Human), this protein is Lumican (LUM).